The primary structure comprises 403 residues: uncharacterized protein (403 aa).

Residues 55–88 show a composition bias toward polar residues; sequence LTGSPNPQATPKQENKSNFFSEKQSVRENGNSSA. Positions 55-95 are disordered; sequence LTGSPNPQATPKQENKSNFFSEKQSVRENGNSSAGEKKQKW. A Phosphoserine modification is found at S58. Positions 113–177 constitute a J domain; the sequence is QYYEILDLKK…NLRAHYDRTG (65 aa). A helical membrane pass occupies residues 263-283; the sequence is SIFYQLLPLIVVILFAFLSNF.

It is found in the endoplasmic reticulum membrane. This is an uncharacterized protein from Schizosaccharomyces pombe (strain 972 / ATCC 24843) (Fission yeast).